We begin with the raw amino-acid sequence, 388 residues long: Protein phosphatase 2C 57 (388 aa).

Residues arginine 59–leucine 348 enclose the PPM-type phosphatase domain. 4 residues coordinate Mn(2+): aspartate 93, glycine 94, aspartate 296, and aspartate 339. Residues valine 363 to methionine 383 form a helical membrane-spanning segment.

The protein belongs to the PP2C family. It depends on Mg(2+) as a cofactor. The cofactor is Mn(2+).

It is found in the membrane. The protein resides in the plastid. Its subcellular location is the chloroplast stroma. The enzyme catalyses O-phospho-L-seryl-[protein] + H2O = L-seryl-[protein] + phosphate. The catalysed reaction is O-phospho-L-threonyl-[protein] + H2O = L-threonyl-[protein] + phosphate. Its function is as follows. Protein phosphatase specifically required for efficient dephosphorylation of the light-harvesting complex II outer antennae (LCHII) and transition from state 2 to state 1. State transition plays a central role in response to environmental changes and allows to adjust to changing light conditions via the redistribution of light excitation energy between photosystem II (PSII) and photosystem I (PSI) in a short time by relocating LHCII proteins. Mainly responsible for the dephosphorylation of Lhcb1 and Lhcb2 but not of the photosystem II core proteins. This is Protein phosphatase 2C 57 from Arabidopsis thaliana (Mouse-ear cress).